A 280-amino-acid polypeptide reads, in one-letter code: MNYLYISYEFNFALETILGEVRIRSVWILIGLGLTWFTCYWFSEELIFLLALPFLTLPFDSYFVCTQLTEAFSTFVATSSIACSYFVFPLISYQIWCFLIPSCYGEQRTKYNRFFYLSGSCFFLFLFLTFSWVVPNVWHFLYFVGATSTNSLMIKLQPKIYDYIMLTVRILFISSVCSQVPVIVICLLELRGLSLETFTNNRRFLMVFSLFTAALFTPPDIWCQIVACFLISLIIELAIFVALIVQVREEGWTSGMRESGSIEKKNKSSPPPRTWQSNYQ.

6 helical membrane passes run 46–66 (LIFL…FVCT), 81–101 (IACS…FLIP), 114–134 (FFYL…SWVV), 137–157 (VWHF…IKLQ), 170–190 (ILFI…LLEL), and 225–245 (IVAC…ALIV). Positions 258–280 (ESGSIEKKNKSSPPPRTWQSNYQ) are disordered.

Belongs to the TatC family.

The protein resides in the mitochondrion membrane. This is an uncharacterized protein from Arabidopsis thaliana (Mouse-ear cress).